A 218-amino-acid polypeptide reads, in one-letter code: Dynein axonemal assembly factor 6 (218 aa).

Residues 66 to 103 (MGPGNIGPPKAKESKAIPEPRSDESENIWNPEEVPEGA) are disordered. Over residues 75–89 (KAKESKAIPEPRSDE) the composition is skewed to basic and acidic residues.

The protein belongs to the PIH1 family. Interacts with HSPA1A/B, HSP90AA1 and DNAI2. Interacts with DNAAF2 and DNAAF4. In terms of tissue distribution, specifically expressed in testis. Detected in pachytene spermatocytes from 5 weeks of age and in pachytene and diplotene spermatocytes of adult mice. Not detected in spermatids or mature sperm.

The protein localises to the cytoplasm. It is found in the golgi apparatus. It localises to the trans-Golgi network. In terms of biological role, plays a role in cytoplasmic pre-assembly of axonemal dynein. This chain is Dynein axonemal assembly factor 6, found in Mus musculus (Mouse).